Here is a 283-residue protein sequence, read N- to C-terminus: uncharacterized protein (283 aa).

The signal sequence occupies residues 1–21 (MKLKLKFLLISLLGSSLLLSA). Cys22 carries N-palmitoyl cysteine lipidation. The S-diacylglycerol cysteine moiety is linked to residue Cys22.

Belongs to the MG439/MG440 family.

The protein localises to the cell membrane. This is an uncharacterized protein from Mycoplasma pneumoniae (strain ATCC 29342 / M129 / Subtype 1) (Mycoplasmoides pneumoniae).